The following is a 681-amino-acid chain: Methionine--tRNA ligase (681 aa).

Positions 14 to 24 (PYANGSIHLGH) match the 'HIGH' region motif. Residues Cys145, Cys148, Cys158, and Cys161 each coordinate Zn(2+). The short motif at 331 to 335 (KMSKS) is the 'KMSKS' region element. An ATP-binding site is contributed by Lys334. Residues 579-681 (AFAAIDLRVA…SGAKPGQRIK (103 aa)) enclose the tRNA-binding domain.

Belongs to the class-I aminoacyl-tRNA synthetase family. MetG type 1 subfamily. In terms of assembly, homodimer. Zn(2+) is required as a cofactor.

Its subcellular location is the cytoplasm. It catalyses the reaction tRNA(Met) + L-methionine + ATP = L-methionyl-tRNA(Met) + AMP + diphosphate. Its function is as follows. Is required not only for elongation of protein synthesis but also for the initiation of all mRNA translation through initiator tRNA(fMet) aminoacylation. In Pseudomonas fluorescens (strain ATCC BAA-477 / NRRL B-23932 / Pf-5), this protein is Methionine--tRNA ligase.